The sequence spans 71 residues: MAVIMVDQAEGGQCQRKCLGHCSKKCPKHPQCRKRCIRRCFGYCLGDEPQQMALDDESDPLVILPNNYNDY.

Residues 1–11 (MAVIMVDQAEG) form the signal peptide. Positions 46–71 (GDEPQQMALDDESDPLVILPNNYNDY) are excised as a propeptide.

Contains 4 disulfide bonds.

It is found in the secreted. Its subcellular location is the target cell membrane. In terms of biological role, antimicrobial peptide with inhibitory activity against both Gram-positive and Gram-negative bacteria (E.coli (MIC=0.25 ug/ml), M.lysodeikticus (MIC=0.25 ug/ml), and V.alginolyticus (MIC=0.25 ug/ml)). Does not show hemolytic activity. The chain is Equinin B from Actinia equina (Beadlet anemone).